A 707-amino-acid polypeptide reads, in one-letter code: Caprin-1 (707 aa).

Low complexity-rich tracts occupy residues 1 to 15 (MPSA…SKSS) and 22 to 43 (GSSG…PATG). The segment at 1-48 (MPSATSHSGSGSKSSGPPPPSGSSGSEAAAGAAAPASQHPATGTGAVQ) is disordered. The residue at position 2 (proline 2) is an N-acetylproline. Position 10 is a phosphoserine (serine 10). A coiled-coil region spans residues 58–92 (VIDKKLRNLEKKKGKLDDYQERMNKGERLNQDQLD). Serine 113 is subject to Phosphoserine. Residues 123 to 151 (KTIKKTARREQLMREEAEQKRLKTVLELQ) are a coiled coil. Omega-N-methylarginine is present on arginine 163. A compositionally biased stretch (low complexity) spans 325–335 (LQQQPQAASPS). The tract at residues 325-347 (LQQQPQAASPSVPEPHSLTPVAQ) is disordered. Residues serine 333 and serine 341 each carry the phosphoserine modification. The segment at 358–379 (QDLMAQMQGPYNFIQDSMLDFE) is G3BP1-binding. Disordered stretches follow at residues 412–496 (ESRL…AGTS), 526–558 (PANE…EQTE), and 570–707 (TYHG…QQVN). Residues 431–452 (PLVSSTSEGYTASQPLYQPSHA) are compositionally biased toward polar residues. Over residues 453–462 (TEQRPQKEPM) the composition is skewed to basic and acidic residues. Positions 465 to 474 (IQATISLNTD) are enriched in polar residues. Residues 475–489 (QTTASSSLPAASQPQ) show a composition bias toward low complexity. Polar residues-rich tracts occupy residues 533 to 552 (LKQQ…SQPH) and 572 to 603 (HGSQ…QPYY). Phosphotyrosine is present on tyrosine 623. Arginine 624 and arginine 631 each carry omega-N-methylarginine. 2 positions are modified to phosphotyrosine: tyrosine 634 and tyrosine 637. Arginine 638 is modified (omega-N-methylarginine). The segment covering 640–655 (SFSNTPNSGYSQSQFT) has biased composition (polar residues). O-linked (GlcNAc) serine glycans are attached at residues serine 642 and serine 647. Residues tyrosine 649, tyrosine 660, tyrosine 663, and tyrosine 668 each carry the phosphotyrosine modification. Low complexity-rich tracts occupy residues 674–684 (RGSGQSGPRGA) and 695–707 (NRGM…QQVN). Arginine 696 carries the asymmetric dimethylarginine; alternate modification. Position 696 is an omega-N-methylarginine; alternate (arginine 696).

The protein belongs to the caprin family. In terms of assembly, may form homomultimers. Interacts with G3BP1; interaction is direct and promotes stress granule formation. Interacts with G3BP2; interaction is direct and promotes stress granule formation. Interacts with PQBP1. Interacts with DDX3X. Interacts (when phosphorylated by EPHA4) with FMR1; interaction with FMR1 promotes formation of a membraneless compartment. Tyrosine phosphorylation by EPHA4 promotes interaction with FMR1 and liquid-liquid phase separation (LLPS) for the formation of a membraneless compartment that concentrates mRNAs with associated regulatory factors. Post-translationally, O-glycosylated (O-GlcNAcylated), in a cell cycle-dependent manner. O-glycosylation by OGT inhibit ability to undergo liquid-liquid phase separation (LLPS). In terms of tissue distribution, highest expression in thymus, spleen and brain (at protein level). Lower levels in kidney, muscle and liver (at protein level).

It localises to the cytoplasm. Its subcellular location is the cytoplasmic ribonucleoprotein granule. The protein localises to the cytosol. It is found in the cell projection. The protein resides in the dendrite. It localises to the lamellipodium. With respect to regulation, ability to mediate liquid-liquid phase separation is regulated by ATP: moderate concentrations of ATP enhance phase separation, whereas high concentrations of ATP lead to inhibition of phase separation. Its function is as follows. mRNA-binding protein that acts as a regulator of mRNAs transport, translation and/or stability, and which is involved in neurogenesis, synaptic plasticity in neurons and cell proliferation and migration in multiple cell types. Plays an essential role in cytoplasmic stress granule formation. Acts as an mRNA regulator by mediating formation of some phase-separated membraneless compartment: undergoes liquid-liquid phase separation upon binding to target mRNAs, leading to assemble mRNAs into cytoplasmic ribonucleoprotein granules that concentrate mRNAs with associated regulatory factors. Undergoes liquid-liquid phase separation following phosphorylation and interaction with FMR1, promoting formation of cytoplasmic ribonucleoprotein granules that concentrate mRNAs with factors that inhibit translation and mediate deadenylation of target mRNAs. In these cytoplasmic ribonucleoprotein granules, CAPRIN1 mediates recruitment of CNOT7 deadenylase, leading to mRNA deadenylation and degradation. Binds directly and selectively to MYC and CCND2 mRNAs. In neuronal cells, directly binds to several mRNAs associated with RNA granules, including BDNF, CAMK2A, CREB1, MAP2, NTRK2 mRNAs, as well as to GRIN1 and KPNB1 mRNAs, but not to rRNAs. The chain is Caprin-1 (Caprin1) from Mus musculus (Mouse).